The following is a 169-amino-acid chain: Peptide methionine sulfoxide reductase MsrA (169 aa).

Cys-10 is an active-site residue.

This sequence belongs to the MsrA Met sulfoxide reductase family.

It carries out the reaction L-methionyl-[protein] + [thioredoxin]-disulfide + H2O = L-methionyl-(S)-S-oxide-[protein] + [thioredoxin]-dithiol. It catalyses the reaction [thioredoxin]-disulfide + L-methionine + H2O = L-methionine (S)-S-oxide + [thioredoxin]-dithiol. Its function is as follows. Has an important function as a repair enzyme for proteins that have been inactivated by oxidation. Catalyzes the reversible oxidation-reduction of methionine sulfoxide in proteins to methionine. The sequence is that of Peptide methionine sulfoxide reductase MsrA from Streptococcus mutans serotype c (strain ATCC 700610 / UA159).